Here is a 39-residue protein sequence, read N- to C-terminus: Cytochrome b6-f complex subunit 5 (39 aa).

The helical transmembrane segment at 5-25 (LLSGIVLGLVPVTILGLFVTA) threads the bilayer.

The protein belongs to the PetG family. As to quaternary structure, the 4 large subunits of the cytochrome b6-f complex are cytochrome b6, subunit IV (17 kDa polypeptide, PetD), cytochrome f and the Rieske protein, while the 4 small subunits are PetG, PetL, PetM and PetN. The complex functions as a dimer.

It localises to the plastid. It is found in the chloroplast thylakoid membrane. Its function is as follows. Component of the cytochrome b6-f complex, which mediates electron transfer between photosystem II (PSII) and photosystem I (PSI), cyclic electron flow around PSI, and state transitions. PetG is required for either the stability or assembly of the cytochrome b6-f complex. This chain is Cytochrome b6-f complex subunit 5, found in Pleurastrum terricola (Filamentous green alga).